A 308-amino-acid polypeptide reads, in one-letter code: UDP-N-acetylenolpyruvoylglucosamine reductase (308 aa).

An FAD-binding PCMH-type domain is found at 37 to 201 (RVGGPAQVLF…TQATFRGTPG (165 aa)). The active site involves Arg181. The span at 216 to 233 (SREATQPIKSRTGGSTFK) shows a compositional bias: polar residues. The disordered stretch occupies residues 216-236 (SREATQPIKSRTGGSTFKNPP). The Proton donor role is filled by Ser230. Glu300 is a catalytic residue.

It belongs to the MurB family. FAD is required as a cofactor.

It is found in the cytoplasm. The catalysed reaction is UDP-N-acetyl-alpha-D-muramate + NADP(+) = UDP-N-acetyl-3-O-(1-carboxyvinyl)-alpha-D-glucosamine + NADPH + H(+). It participates in cell wall biogenesis; peptidoglycan biosynthesis. Functionally, cell wall formation. This is UDP-N-acetylenolpyruvoylglucosamine reductase from Azorhizobium caulinodans (strain ATCC 43989 / DSM 5975 / JCM 20966 / LMG 6465 / NBRC 14845 / NCIMB 13405 / ORS 571).